Reading from the N-terminus, the 159-residue chain is 3-dehydroquinate dehydratase (159 aa).

Tyrosine 31 serves as the catalytic Proton acceptor. The substrate site is built by asparagine 82, histidine 88, and aspartate 95. Histidine 109 (proton donor) is an active-site residue. Substrate-binding positions include 110–111 (IS) and arginine 120.

Belongs to the type-II 3-dehydroquinase family. As to quaternary structure, homododecamer.

The enzyme catalyses 3-dehydroquinate = 3-dehydroshikimate + H2O. It participates in metabolic intermediate biosynthesis; chorismate biosynthesis; chorismate from D-erythrose 4-phosphate and phosphoenolpyruvate: step 3/7. Catalyzes a trans-dehydration via an enolate intermediate. The sequence is that of 3-dehydroquinate dehydratase from Streptomyces avermitilis (strain ATCC 31267 / DSM 46492 / JCM 5070 / NBRC 14893 / NCIMB 12804 / NRRL 8165 / MA-4680).